Here is a 1752-residue protein sequence, read N- to C-terminus: DNA-directed RNA polymerase II subunit rpb1 (1752 aa).

Zn(2+) contacts are provided by Cys-69, Cys-72, Cys-79, His-82, Cys-109, Cys-112, Cys-150, and Cys-175. Residues Asp-487, Asp-489, and Asp-491 each coordinate Mg(2+). A bridging helix region spans residues 816-828 (PQEFFFHAMAGRE). Residue Lys-1252 forms a Glycyl lysine isopeptide (Lys-Gly) (interchain with G-Cter in ubiquitin) linkage. Phosphoserine is present on residues Ser-1489, Ser-1499, Ser-1506, and Ser-1529. Position 1531 is a phosphotyrosine (Tyr-1531). Residues 1554–1752 (TSPSYSPSSP…SPSYSPTSPS (199 aa)) are disordered. Repeat copies occupy residues 1558–1564 (YSPSSPG), 1578–1584 (YSPTSPS), 1585–1591 (YSPTSPS), 1592–1598 (YSPTSPS), and 1599–1605 (YSPTSPS). A C-terminal domain (CTD); 26 X 7 AA approximate tandem repeats of Y-S-P-[TS]-S-P-S region spans residues 1558–1752 (YSPSSPGYST…SPSYSPTSPS (195 aa)). A 6; approximate repeat occupies 1606–1612 (YSATSPS). 20 tandem repeats follow at residues 1613 to 1619 (YSPTSPS), 1620 to 1626 (YSPTSPS), 1627 to 1633 (YSPTSPS), 1634 to 1640 (YSPTSPS), 1641 to 1647 (YSPTSPS), 1648 to 1654 (YSPTSPS), 1655 to 1661 (YSPTSPS), 1662 to 1668 (YSPTSPS), 1669 to 1675 (YSPTSPS), 1676 to 1682 (YSPTSPS), 1683 to 1689 (YSPTSPS), 1690 to 1696 (YSPTSPS), 1697 to 1703 (YSPTSPS), 1704 to 1710 (YSPTSPS), 1711 to 1717 (YSPTSPS), 1718 to 1724 (YSPTSPS), 1725 to 1731 (YSPTSPS), 1732 to 1738 (YSPTSPS), 1739 to 1745 (YSPTSPS), and 1746 to 1752 (YSPTSPS).

This sequence belongs to the RNA polymerase beta' chain family. As to quaternary structure, component of the RNA polymerase II (Pol II) complex consisting of 12 subunits. The tandem 7 residues repeats in the C-terminal domain (CTD) can be highly phosphorylated. The phosphorylation activates Pol II. Phosphorylation occurs mainly at residues 'Ser-2' and 'Ser-5' of the heptapeptide repeat. The phosphorylation state is believed to result from the balanced action of site-specific CTD kinases and phosphatase, and a 'CTD code' that specifies the position of Pol II within the transcription cycle has been proposed. Post-translationally, following transcription stress, the elongating form of RNA polymerase II (RNA pol IIo) is polyubiquitinated via 'Lys-63'-linkages on Lys-1252 at DNA damage sites without leading to degradation: ubiquitination promotes RNA pol IIo backtracking to allow access by the transcription-coupled nucleotide excision repair (TC-NER) machinery. Subsequent def1-dependent polyubiquitination by the elongin complex via 'Lys-48'-linkages may lead to proteasome-mediated degradation; presumably at stalled RNA pol II where TC-NER has failed, to halt global transcription and enable 'last resort' DNA repair pathways.

The protein resides in the nucleus. It carries out the reaction RNA(n) + a ribonucleoside 5'-triphosphate = RNA(n+1) + diphosphate. Functionally, DNA-dependent RNA polymerase catalyzes the transcription of DNA into RNA using the four ribonucleoside triphosphates as substrates. Largest and catalytic component of RNA polymerase II which synthesizes mRNA precursors and many functional non-coding RNAs. Forms the polymerase active center together with the second largest subunit. Pol II is the central component of the basal RNA polymerase II transcription machinery. It is composed of mobile elements that move relative to each other. RPB1 is part of the core element with the central large cleft, the clamp element that moves to open and close the cleft and the jaws that are thought to grab the incoming DNA template. At the start of transcription, a single-stranded DNA template strand of the promoter is positioned within the central active site cleft of Pol II. A bridging helix emanates from RPB1 and crosses the cleft near the catalytic site and is thought to promote translocation of Pol II by acting as a ratchet that moves the RNA-DNA hybrid through the active site by switching from straight to bent conformations at each step of nucleotide addition. During transcription elongation, Pol II moves on the template as the transcript elongates. Elongation is influenced by the phosphorylation status of the C-terminal domain (CTD) of Pol II largest subunit (RPB1), which serves as a platform for assembly of factors that regulate transcription initiation, elongation, termination and mRNA processing. The polypeptide is DNA-directed RNA polymerase II subunit rpb1 (rpb1) (Schizosaccharomyces pombe (strain 972 / ATCC 24843) (Fission yeast)).